We begin with the raw amino-acid sequence, 460 residues long: ERAD-associated E3 ubiquitin-protein ligase HRD1B (460 aa).

Residues 1-3 are Cytoplasmic-facing; it reads MIQ. A helical membrane pass occupies residues 4-24; the sequence is LKVYAGLSTLATLVVIYHAFS. Topologically, residues 25-40 are lumenal; sequence SRGQFYPATVYLSTSK. The helical transmembrane segment at 41 to 61 threads the bilayer; that stretch reads INLVVLLNMGLVLMLSLWNLV. The Cytoplasmic segment spans residues 62–98; the sequence is KIVFLGSLREAEVERLNEQAWRELMEILFAITIFRQD. The helical transmembrane segment at 99 to 119 threads the bilayer; it reads FSVGFISLVVTLLLIKGLHWM. Over 120–140 the chain is Lumenal; that stretch reads AQKRVEYIETTPSVTLLSHVR. A helical transmembrane segment spans residues 141–161; that stretch reads IVSFMVFLLILDCLLTYSSIQ. Topologically, residues 162–170 are cytoplasmic; it reads QLIQSRKAS. Residues 171 to 191 form a helical membrane-spanning segment; the sequence is MSVFFTFEYMILATTTVSIIV. Residues 192–225 lie on the Lumenal side of the membrane; it reads KYAFYVTDMLKEGQWEGKPVYTFYLELVRDLLHL. The helical transmembrane segment at 226-246 threads the bilayer; that stretch reads SMYLCFFLMIFMNYGLPLHLI. Over 247-460 the chain is Cytoplasmic; it reads RELYETFRNF…TKGKSVADTA (214 aa). The RING-type; atypical zinc finger occupies 292–330; that stretch reads CIICREEMTSAKKLVCGHLFHVHCLRSWLERQNTCPTCR. The segment at 339–378 is disordered; that stretch reads ATSTASGNRGPHQESLQQGTGTSSSDGQGSSVSAAASENM. The segment covering 353–375 has biased composition (low complexity); sequence SLQQGTGTSSSDGQGSSVSAAAS.

Belongs to the HRD1 family.

It localises to the endoplasmic reticulum membrane. The catalysed reaction is S-ubiquitinyl-[E2 ubiquitin-conjugating enzyme]-L-cysteine + [acceptor protein]-L-lysine = [E2 ubiquitin-conjugating enzyme]-L-cysteine + N(6)-ubiquitinyl-[acceptor protein]-L-lysine.. It functions in the pathway protein modification; protein ubiquitination. Probable component of the HRD1 ubiquitin ligase complex that mediates the rapid degradation of misfolded endoplasmic reticulum (ER) proteins, a process called ER-associated degradation (ERAD). Targets the misfolded LRR receptor kinase BRI1. Functions redundantly with HRD3A. This is ERAD-associated E3 ubiquitin-protein ligase HRD1B from Arabidopsis thaliana (Mouse-ear cress).